Reading from the N-terminus, the 90-residue chain is Probable Fe(2+)-trafficking protein (90 aa).

Belongs to the Fe(2+)-trafficking protein family.

Its function is as follows. Could be a mediator in iron transactions between iron acquisition and iron-requiring processes, such as synthesis and/or repair of Fe-S clusters in biosynthetic enzymes. The sequence is that of Probable Fe(2+)-trafficking protein from Pseudoalteromonas atlantica (strain T6c / ATCC BAA-1087).